Consider the following 187-residue polypeptide: Reactive Intermediate Deaminase A, chloroplastic (187 aa).

The N-terminal 58 residues, 1-58, are a transit peptide targeting the chloroplast; it reads MTWSVFRSINTPTLDLSTALRSTRTPLVAAGVGCATFAGVSLFRMSSRSPPFASLSVS. R165 serves as a coordination point for substrate.

The protein belongs to the RutC family. As to expression, expressed in leaves, petiols, petals, carpels and shoot apex.

It is found in the plastid. It localises to the chloroplast. It carries out the reaction 2-iminobutanoate + H2O = 2-oxobutanoate + NH4(+). The catalysed reaction is 2-iminopropanoate + H2O = pyruvate + NH4(+). The protein operates within amino-acid biosynthesis; L-isoleucine biosynthesis; 2-oxobutanoate from L-threonine. In terms of biological role, hydrolyzes the Ser-derived enamine/imine product of Thr dehydratase, protecting the plastidial branched-chain aminotransferase BCAT3 (AC Q9M401) from inactivation. Involved in Ile biosynthesis. This chain is Reactive Intermediate Deaminase A, chloroplastic, found in Arabidopsis thaliana (Mouse-ear cress).